Consider the following 430-residue polypeptide: Probable ribosomal RNA small subunit methyltransferase B (430 aa).

Residues 246 to 252 (CAAPGSK), Asp-270, Asp-299, and Asp-318 each bind S-adenosyl-L-methionine. Catalysis depends on Cys-371, which acts as the Nucleophile.

The protein belongs to the class I-like SAM-binding methyltransferase superfamily. RsmB/NOP family.

The protein resides in the cytoplasm. The enzyme catalyses cytidine(967) in 16S rRNA + S-adenosyl-L-methionine = 5-methylcytidine(967) in 16S rRNA + S-adenosyl-L-homocysteine + H(+). Specifically methylates the cytosine at position 967 (m5C967) of 16S rRNA. This is Probable ribosomal RNA small subunit methyltransferase B from Coxiella burnetii (strain RSA 493 / Nine Mile phase I).